The chain runs to 328 residues: Ferredoxin--NADP reductase 1 (328 aa).

FAD-binding residues include E37, K45, Y49, V89, and T310.

The protein belongs to the ferredoxin--NADP reductase type 2 family. In terms of assembly, homodimer. It depends on FAD as a cofactor.

It catalyses the reaction 2 reduced [2Fe-2S]-[ferredoxin] + NADP(+) + H(+) = 2 oxidized [2Fe-2S]-[ferredoxin] + NADPH. The chain is Ferredoxin--NADP reductase 1 from Latilactobacillus sakei subsp. sakei (strain 23K) (Lactobacillus sakei subsp. sakei).